A 514-amino-acid polypeptide reads, in one-letter code: Putative selenium-binding protein (514 aa).

This sequence belongs to the selenium-binding protein family.

This Caenorhabditis briggsae protein is Putative selenium-binding protein.